Reading from the N-terminus, the 503-residue chain is Cobyric acid synthase (503 aa).

Residues Ala255–Phe444 enclose the GATase cobBQ-type domain. Catalysis depends on Cys337, which acts as the Nucleophile. The active site involves His436.

The protein belongs to the CobB/CobQ family. CobQ subfamily.

It functions in the pathway cofactor biosynthesis; adenosylcobalamin biosynthesis. In terms of biological role, catalyzes amidations at positions B, D, E, and G on adenosylcobyrinic A,C-diamide. NH(2) groups are provided by glutamine, and one molecule of ATP is hydrogenolyzed for each amidation. The protein is Cobyric acid synthase of Geobacillus kaustophilus (strain HTA426).